The following is a 251-amino-acid chain: Ubiquinone/menaquinone biosynthesis C-methyltransferase UbiE (251 aa).

S-adenosyl-L-methionine contacts are provided by residues Thr-74, Asp-95, and 123–124; that span reads NA.

The protein belongs to the class I-like SAM-binding methyltransferase superfamily. MenG/UbiE family.

The catalysed reaction is a 2-demethylmenaquinol + S-adenosyl-L-methionine = a menaquinol + S-adenosyl-L-homocysteine + H(+). It carries out the reaction a 2-methoxy-6-(all-trans-polyprenyl)benzene-1,4-diol + S-adenosyl-L-methionine = a 5-methoxy-2-methyl-3-(all-trans-polyprenyl)benzene-1,4-diol + S-adenosyl-L-homocysteine + H(+). Its pathway is quinol/quinone metabolism; menaquinone biosynthesis; menaquinol from 1,4-dihydroxy-2-naphthoate: step 2/2. The protein operates within cofactor biosynthesis; ubiquinone biosynthesis. Methyltransferase required for the conversion of demethylmenaquinol (DMKH2) to menaquinol (MKH2) and the conversion of 2-polyprenyl-6-methoxy-1,4-benzoquinol (DDMQH2) to 2-polyprenyl-3-methyl-6-methoxy-1,4-benzoquinol (DMQH2). This is Ubiquinone/menaquinone biosynthesis C-methyltransferase UbiE from Shewanella piezotolerans (strain WP3 / JCM 13877).